A 305-amino-acid chain; its full sequence is Transmembrane epididymal protein 1A (305 aa).

A helical transmembrane segment spans residues 4 to 24 (FIGHISPGLFLVFYGLYQAVI). N32 is a glycosylation site (N-linked (GlcNAc...) asparagine). The next 5 helical transmembrane spans lie at 54–74 (IAHA…YEIS), 124–144 (CVLL…LLLV), 159–179 (SLLI…LWAP), 187–207 (IETF…FILF), and 223–243 (IMFV…CMLG). The disordered stretch occupies residues 285–305 (EQQDKDDQAPLLSKISPCDRA).

Belongs to the TMEM45 family.

It is found in the membrane. The chain is Transmembrane epididymal protein 1A from Mus musculus (Mouse).